A 474-amino-acid chain; its full sequence is Calcitonin receptor (474 aa).

A signal peptide spans 1–24 (MRFTFTSRCLALFLLLNHPTPILP). Residues 25 to 146 (AFSNQTYPTI…FTPEKLKNAY (122 aa)) lie on the Extracellular side of the membrane. Residues N28, N73, N125, and N130 are each glycosylated (N-linked (GlcNAc...) asparagine). Intrachain disulfides connect C55/C81, C72/C112, and C95/C134. The helical transmembrane segment at 147–169 (VLYYLAIVGHSLSIFTLVISLGI) threads the bilayer. Over 170–181 (FVFFRSLGCQRV) the chain is Cytoplasmic. The chain crosses the membrane as a helical span at residues 182–202 (TLHKNMFLTYILNSMIIIIHL). Over 203–219 (VEVVPNGELVRRDPVSC) the chain is Extracellular. A disulfide bond links C219 and C289. A helical transmembrane segment spans residues 220-242 (KILHFFHQYMMACNYFWMLCEGI). Over 243–259 (YLHTLIVVAVFTEKQRL) the chain is Cytoplasmic. The helical transmembrane segment at 260–280 (RWYYLLGWGFPLVPTTIHAIT) threads the bilayer. Topologically, residues 281 to 296 (RAVYFNDNCWLSVETH) are extracellular. The helical transmembrane segment at 297 to 320 (LLYIIHGPVMAALVVNFFFLLNIV) threads the bilayer. At 321-340 (RVLVTKMRETHEAESHMYLK) the chain is on the cytoplasmic side. A helical transmembrane segment spans residues 341–359 (AVKATMILVPLLGIQFVVF). The Extracellular portion of the chain corresponds to 360-367 (PWRPSNKM). The chain crosses the membrane as a helical span at residues 368-394 (LGKIYDYVMHSLIHFQGFFVATIYCFC). Topologically, residues 395 to 474 (NNEVQTTVKR…LNIIEQESSA (80 aa)) are cytoplasmic.

This sequence belongs to the G-protein coupled receptor 2 family. Heterodimer of CALCR and RAMP1, RAMP2 or RAMP3; the receptor complexes function as AMYR1, AMYR2 and AMYR3 receptors, respectively, and respond to amylin/IAPP, calcitonin/CT and CGRP1 ligands. Interacts with GPRASP2.

It localises to the cell membrane. With respect to regulation, sensitive to cholera toxin. Functionally, g protein-coupled receptor activated by ligand peptides amylin (IAPP), calcitonin (CT/CALCA) and calcitonin gene-related peptide type 1 (CGRP1/CALCA). CALCR interacts with receptor-activity-modifying proteins RAMP1, 2 and 3 to form receptor complexes AMYR1, 2 and 3, respectively. IAPP, CT and CGRP1 activate CALCR and AMYRs with distinct modes of receptor activation resulting in specific phenotypes. Ligand binding causes a conformation change that triggers signaling via guanine nucleotide-binding proteins (G proteins) and modulates the activity of downstream effectors. Activates cAMP-dependent pathway. Non-functional protein. Unable to couple to G proteins and activate adenylyl cyclase. Does not undergo receptor internalization following ligand binding. The polypeptide is Calcitonin receptor (Homo sapiens (Human)).